Reading from the N-terminus, the 277-residue chain is uncharacterized protein (277 aa).

An ATP-binding site is contributed by 32–39; it reads GPQGSGKS.

Belongs to the GLYK kinase family.

Its subcellular location is the cytoplasm. It is found in the nucleus. In terms of biological role, has a role in meiosis. This is an uncharacterized protein from Schizosaccharomyces pombe (strain 972 / ATCC 24843) (Fission yeast).